The primary structure comprises 264 residues: Acetylglutamate kinase (264 aa).

Substrate is bound by residues 40–41 (GG), arginine 62, and asparagine 158.

The protein belongs to the acetylglutamate kinase family. ArgB subfamily.

The protein resides in the cytoplasm. The catalysed reaction is N-acetyl-L-glutamate + ATP = N-acetyl-L-glutamyl 5-phosphate + ADP. The protein operates within amino-acid biosynthesis; L-arginine biosynthesis; N(2)-acetyl-L-ornithine from L-glutamate: step 2/4. Functionally, catalyzes the ATP-dependent phosphorylation of N-acetyl-L-glutamate. This Cytophaga hutchinsonii (strain ATCC 33406 / DSM 1761 / CIP 103989 / NBRC 15051 / NCIMB 9469 / D465) protein is Acetylglutamate kinase.